We begin with the raw amino-acid sequence, 707 residues long: Ribosomal RNA large subunit methyltransferase K/L (707 aa).

Positions 44–155 (VIYNLCLWSR…NDILTVSFDL (112 aa)) constitute a THUMP domain.

The protein belongs to the methyltransferase superfamily. RlmKL family.

It localises to the cytoplasm. It carries out the reaction guanosine(2445) in 23S rRNA + S-adenosyl-L-methionine = N(2)-methylguanosine(2445) in 23S rRNA + S-adenosyl-L-homocysteine + H(+). The catalysed reaction is guanosine(2069) in 23S rRNA + S-adenosyl-L-methionine = N(2)-methylguanosine(2069) in 23S rRNA + S-adenosyl-L-homocysteine + H(+). Functionally, specifically methylates the guanine in position 2445 (m2G2445) and the guanine in position 2069 (m7G2069) of 23S rRNA. The sequence is that of Ribosomal RNA large subunit methyltransferase K/L from Legionella pneumophila (strain Corby).